The primary structure comprises 191 residues: tRNA-specific adenosine deaminase 2 (191 aa).

One can recognise a CMP/dCMP-type deaminase domain in the interval 20 to 145 (EETEKWMEEA…SVLNIASADL (126 aa)). Residue His-71 participates in Zn(2+) binding. Residue Glu-73 is the Proton donor of the active site. Residues Cys-107 and Cys-110 each contribute to the Zn(2+) site.

The protein belongs to the cytidine and deoxycytidylate deaminase family. ADAT2 subfamily. Requires Zn(2+) as cofactor.

It catalyses the reaction adenosine(34) in tRNA + H2O + H(+) = inosine(34) in tRNA + NH4(+). Functionally, probably participates in deamination of adenosine-34 to inosine in many tRNAs. In Homo sapiens (Human), this protein is tRNA-specific adenosine deaminase 2 (ADAT2).